The chain runs to 97 residues: Large ribosomal subunit protein uL23 (97 aa).

The protein belongs to the universal ribosomal protein uL23 family. Part of the 50S ribosomal subunit. Contacts protein L29, and trigger factor when it is bound to the ribosome.

Functionally, one of the early assembly proteins it binds 23S rRNA. One of the proteins that surrounds the polypeptide exit tunnel on the outside of the ribosome. Forms the main docking site for trigger factor binding to the ribosome. In Rhizobium etli (strain CIAT 652), this protein is Large ribosomal subunit protein uL23.